The sequence spans 346 residues: Anthranilate phosphoribosyltransferase (346 aa).

5-phospho-alpha-D-ribose 1-diphosphate-binding positions include G81, 84 to 85 (GD), 91 to 94 (NVST), 109 to 117 (KHGGRSVSS), and S121. G81 contacts anthranilate. A Mg(2+)-binding site is contributed by S93. Position 167 (R167) interacts with anthranilate. Residues D226 and E227 each contribute to the Mg(2+) site.

This sequence belongs to the anthranilate phosphoribosyltransferase family. In terms of assembly, homodimer. The cofactor is Mg(2+).

It carries out the reaction N-(5-phospho-beta-D-ribosyl)anthranilate + diphosphate = 5-phospho-alpha-D-ribose 1-diphosphate + anthranilate. It functions in the pathway amino-acid biosynthesis; L-tryptophan biosynthesis; L-tryptophan from chorismate: step 2/5. Catalyzes the transfer of the phosphoribosyl group of 5-phosphorylribose-1-pyrophosphate (PRPP) to anthranilate to yield N-(5'-phosphoribosyl)-anthranilate (PRA). In Marinomonas sp. (strain MWYL1), this protein is Anthranilate phosphoribosyltransferase.